Consider the following 151-residue polypeptide: GTP-dependent dephospho-CoA kinase (151 aa).

D30, V31, D49, K51, and E104 together coordinate GTP.

This sequence belongs to the GTP-dependent DPCK family.

The enzyme catalyses 3'-dephospho-CoA + GTP = GDP + CoA + H(+). It functions in the pathway cofactor biosynthesis; coenzyme A biosynthesis. Functionally, catalyzes the GTP-dependent phosphorylation of the 3'-hydroxyl group of dephosphocoenzyme A to form coenzyme A (CoA). The polypeptide is GTP-dependent dephospho-CoA kinase (Cenarchaeum symbiosum (strain A)).